Reading from the N-terminus, the 1339-residue chain is Tuberous sclerosis 2 protein homolog (1339 aa).

Position 1036 is a phosphoserine (serine 1036). Residues isoleucine 1109–leucine 1303 enclose the Rap-GAP domain.

In terms of assembly, interacts with tsc1.

Its subcellular location is the cytoplasm. It is found in the nucleus. Together with tsc1, required for uptake of various amino acids from the environment and for proper conjugation. Involved in induction of gene expression of permeases and genes required for meiosis upon nitrogen starvation. May act as a GTPase-activating protein (GAP) for the small GTPase rhb1. This chain is Tuberous sclerosis 2 protein homolog (tsc2), found in Schizosaccharomyces pombe (strain 972 / ATCC 24843) (Fission yeast).